We begin with the raw amino-acid sequence, 293 residues long: ELMO domain-containing protein 2 (293 aa).

One can recognise an ELMO domain in the interval 126–282 (QHEELLMKLW…KFHEKIKGLL (157 aa)).

Alveolar cells (morphologically type II cells) and alveolar macrophages (at protein level). Expressed in brain, colon, heart, kidney, liver, lung, muscle, placenta, small intestine, spleen, stomach and testis. In lung it is expressed in alveolar macrophages and alveolar walls.

In terms of biological role, acts as a GTPase-activating protein (GAP) toward guanine nucleotide exchange factors like ARL2, ARL3, ARF1 and ARF6, but not for GTPases outside the Arf family. Regulates IFN-related antiviral responses. In Homo sapiens (Human), this protein is ELMO domain-containing protein 2 (ELMOD2).